Here is a 298-residue protein sequence, read N- to C-terminus: MQLSRVRSVLLDVFALAKVKQTLLLLFTMYTAYIVGGGLGKPYERHLVVLTLGFITIAAVTALNMYFDRDIDALMERTRDRPLPAGRLDPLKVFIATVAATIVSVILAWRIINPHFALAIVIGFLFDIVAYTYLLKRRTPLSIIAGAVAGGAPALGGWAAAAGRIDVNALLFSLIVATWVPSHIWFLATYYRDDYRRANVPMLPVVADTPIAVASGIGLGSLVMGYSIVGLWVNNVIGTVSLIVGVIAAIAIFHLAVKYAELGGDPNYSRTAFKKTNMMLGLVFLVMMLEKVVSYIIS.

The next 9 helical transmembrane spans lie at 23–43 (LLLL…GKPY), 47–67 (LVVL…NMYF), 93–113 (VFIA…RIIN), 115–135 (HFAL…TYLL), 143–163 (IIAG…AAAG), 169–189 (ALLF…FLAT), 211–231 (IAVA…IVGL), 236–256 (VIGT…FHLA), and 278–298 (MMLG…YIIS).

The protein belongs to the UbiA prenyltransferase family. Protoheme IX farnesyltransferase subfamily.

Its subcellular location is the cell membrane. It carries out the reaction heme b + (2E,6E)-farnesyl diphosphate + H2O = Fe(II)-heme o + diphosphate. The protein operates within porphyrin-containing compound metabolism; heme O biosynthesis; heme O from protoheme: step 1/1. Converts heme B (protoheme IX) to heme O by substitution of the vinyl group on carbon 2 of heme B porphyrin ring with a hydroxyethyl farnesyl side group. The sequence is that of Protoheme IX farnesyltransferase from Hyperthermus butylicus (strain DSM 5456 / JCM 9403 / PLM1-5).